We begin with the raw amino-acid sequence, 1465 residues long: MSDLFAKLMDQIEMPLDMRRSSAFSSADIIEVKVHSVSRLWEFHFAFAAVLPIATYRELHDRLIRTFEAADIKVTFDIQAAQVDYSDDLLQAYYQEAFEHAPCNSASFKSSFSKLKVTYEDDKLIIAAPGFVNNDHFRNNHLPNLVKQFEAFGFGTLTIDMVSDQEMTEHLTKNFVSSRQALVEKAVQDNLEAQKSLEAMMPPVEEATPAPKFDYKERAAKRQAGFEKATITPMIEIETEENRIVFEGMVFDVERKTTRTGRHIINFKMTDYTSSFALQKWAKDDEELRKFDMIAKGAWLRVQGNIETNPFTKSLTMNVQQVKEIVHHERKDLMPEGQKRVEFHAHTNMSTMDALPTVESLIDMAAKWGHKAVAITDHANVQSFPHGYHRARKAGIKAIFGLEANIVEDKVPISYDPVDMDLHEATYVVFDVETTGLSAMNNDLIQIAASKMFKGNIVEQFDEFIDPGHPLSAFTTELTGITDKHLQGAKPLVTVLKAFQDFCKDSILVAHNASFDVGFMNANYERHDLPKITQPVIDTLEFARNLYPEYKRHGLGPLTKRFQVSLDHHHMANYDAEATGRLLFIFLKDAREKHGIKNLLQLNTDLVAEDSYKKARIKHATIYVQNQVGLKNMFKLVSLSNIKYFEGIPRIPRTVLDAHREGLLLGTACSDGEVFDAVLTKGIDAAVDLAKYYDFIEIMPPAIYQPLVVRELIKDQAGIEQVIRDLIEVGKRANKPVLATGNVHYLEPEEEIYREIIVRSLGQGAMINRTIGRGEGAQPAPLPKAHFRTTNEMLDEFAFLGKDLAYQVVVENTQDFADRIEEVEVVKGDLYTPYIDKAEETVAELTYQKAFEIYGNPLPDIIDLRIEKELTSILGNGFAVIYLASQMLVNRSNERGYLVGSRGSVGSSFVATMIGITEVNPMPPHYVCPSCQHSEFITDGSVGSGYDLPNKPCPKCGTPYQKDGQDIPFETFLGFDGDKVPDIDLNFSGDDQPSAHLDVRDIFGDEYAFRAGTVGTVAEKTAYGFVKGYERDYGKFYRDAEVERLAAGAAGVKRTTGQHPGGIVVIPNYMDVYDFTPVQYPADDVTASWQTTHFNFHDIDENVLKLDILGHDDPTMIRKLQDLSGIDPITIPADDPGVMALFSGTEVLGVTPEQIGTPTGMLGIPEFGTNFVRGMVNETHPTTFAELLQLSGLSHGTDVWLGNAQDLIKEGIATLKTVIGCRDDIMVYLMHAGLEPKMAFTIMERVRKGLWLKISEEERNGYIDAMRENNVPDWYIESCGKIKYMFPKAHAAAYVLMALRVAYFKVHHPIMYYCAYFSIRAKAFELKTMSGGLDAVKARMEDITIKRKNNEATNVENDLFTTLEIVNEMLERGFKFGKLDLYKSDAIEFQIKGDTLIPPFIALEGLGENVAKQIVKARQEGEFLSKMELRKRGGASSTLVEKMDEMSILGNMPEDNQLSLFDDFF.

In terms of domain architecture, Exonuclease spans Tyr-427 to Leu-583.

It belongs to the DNA polymerase type-C family. PolC subfamily.

The protein resides in the cytoplasm. The catalysed reaction is DNA(n) + a 2'-deoxyribonucleoside 5'-triphosphate = DNA(n+1) + diphosphate. Its function is as follows. Required for replicative DNA synthesis. This DNA polymerase also exhibits 3' to 5' exonuclease activity. This Streptococcus pyogenes serotype M6 (strain ATCC BAA-946 / MGAS10394) protein is DNA polymerase III PolC-type.